Consider the following 308-residue polypeptide: Sulfoquinovosyl glycerol transport system permease protein SmoG (308 aa).

6 helical membrane passes run 28 to 48 (LAVL…VYPV), 92 to 112 (VLIT…LALL), 126 to 146 (SLLI…AWFF), 164 to 184 (GIIW…TIIW), 223 to 243 (ITLP…TITA), and 279 to 299 (LGYG…VTAV). The region spanning 88–300 (TWNTVLITLI…ALSMCVTAVY (213 aa)) is the ABC transmembrane type-1 domain.

This sequence belongs to the binding-protein-dependent transport system permease family. As to quaternary structure, the complex is probably composed of two ATP-binding proteins (SmoE), two transmembrane proteins (SmoG and SmoH) and a solute-binding protein (SmoF).

Its subcellular location is the cell inner membrane. In terms of biological role, part of the ABC transporter complex SmoEFGH involved in sulfoquinovosyl glycerol (SQGro) uptake. Responsible for the translocation of the substrate across the membrane. The polypeptide is Sulfoquinovosyl glycerol transport system permease protein SmoG (Agrobacterium fabrum (strain C58 / ATCC 33970) (Agrobacterium tumefaciens (strain C58))).